Consider the following 123-residue polypeptide: Large ribosomal subunit protein bL12 (123 aa).

It belongs to the bacterial ribosomal protein bL12 family. Homodimer. Part of the ribosomal stalk of the 50S ribosomal subunit. Forms a multimeric L10(L12)X complex, where L10 forms an elongated spine to which 2 to 4 L12 dimers bind in a sequential fashion. Binds GTP-bound translation factors.

Its function is as follows. Forms part of the ribosomal stalk which helps the ribosome interact with GTP-bound translation factors. Is thus essential for accurate translation. This chain is Large ribosomal subunit protein bL12, found in Neisseria gonorrhoeae (strain NCCP11945).